We begin with the raw amino-acid sequence, 507 residues long: ATP synthase subunit alpha, chloroplastic (507 aa).

170-177 (GDRQTGKT) provides a ligand contact to ATP. Thr-257 carries the post-translational modification Phosphothreonine.

Belongs to the ATPase alpha/beta chains family. In terms of assembly, F-type ATPases have 2 components, CF(1) - the catalytic core - and CF(0) - the membrane proton channel. CF(1) has five subunits: alpha(3), beta(3), gamma(1), delta(1), epsilon(1). CF(0) has four main subunits: a, b, b' and c.

The protein localises to the plastid. Its subcellular location is the chloroplast thylakoid membrane. The enzyme catalyses ATP + H2O + 4 H(+)(in) = ADP + phosphate + 5 H(+)(out). Its function is as follows. Produces ATP from ADP in the presence of a proton gradient across the membrane. The alpha chain is a regulatory subunit. This chain is ATP synthase subunit alpha, chloroplastic, found in Capsella bursa-pastoris (Shepherd's purse).